We begin with the raw amino-acid sequence, 418 residues long: UDP-N-acetylglucosamine 1-carboxyvinyltransferase (418 aa).

22–23 (KN) contacts phosphoenolpyruvate. A UDP-N-acetyl-alpha-D-glucosamine-binding site is contributed by R92. Residue C116 is the Proton donor of the active site. C116 carries the 2-(S-cysteinyl)pyruvic acid O-phosphothioketal modification. UDP-N-acetyl-alpha-D-glucosamine is bound by residues D306 and I328.

It belongs to the EPSP synthase family. MurA subfamily.

The protein resides in the cytoplasm. The enzyme catalyses phosphoenolpyruvate + UDP-N-acetyl-alpha-D-glucosamine = UDP-N-acetyl-3-O-(1-carboxyvinyl)-alpha-D-glucosamine + phosphate. It participates in cell wall biogenesis; peptidoglycan biosynthesis. In terms of biological role, cell wall formation. Adds enolpyruvyl to UDP-N-acetylglucosamine. The protein is UDP-N-acetylglucosamine 1-carboxyvinyltransferase of Solibacter usitatus (strain Ellin6076).